Consider the following 347-residue polypeptide: DNA-directed RNA polymerase subunit alpha (347 aa).

Residues 1-226 (MLISQRPTLS…ELFGLARELN (226 aa)) are alpha N-terminal domain (alpha-NTD). Residues 243–347 (HIASFALPID…SQDYAETEQL (105 aa)) are alpha C-terminal domain (alpha-CTD). The tract at residues 326–347 (TTGTWSTDGAYDSQDYAETEQL) is disordered.

This sequence belongs to the RNA polymerase alpha chain family. In terms of assembly, homodimer. The RNAP catalytic core consists of 2 alpha, 1 beta, 1 beta' and 1 omega subunit. When a sigma factor is associated with the core the holoenzyme is formed, which can initiate transcription.

The enzyme catalyses RNA(n) + a ribonucleoside 5'-triphosphate = RNA(n+1) + diphosphate. DNA-dependent RNA polymerase catalyzes the transcription of DNA into RNA using the four ribonucleoside triphosphates as substrates. The protein is DNA-directed RNA polymerase subunit alpha of Mycobacterium leprae (strain TN).